The primary structure comprises 240 residues: MAPSRPSSKWRTGGFAARGEGISQVRFGNQNGKRRTWRPNPQQAFRGSVRKGQGFAFRRKLKIQQNYKKLLWKVKEAPASQESQFTDRYPEHLKHLYLAEEERLRKQQRKAGLALSEEQVDRPLPEEEGSTEQTSSEEPPGGHQPQPEELNTGSSVTFPKNKKKKTSNQKAQEEYERVQAKRAAKKFEFEMRKQEREEAQRLYKKKKMEAFKILSKKTKKGQPNLNLQMEYLLQKIQENS.

Residues 104-181 (LRKQQRKAGL…QEEYERVQAK (78 aa)) form a disordered region. The segment covering 131–149 (TEQTSSEEPPGGHQPQPEE) has biased composition (low complexity). The span at 171-181 (AQEEYERVQAK) shows a compositional bias: basic and acidic residues.

The protein belongs to the TAP26 family. Interacts with NKX2-1.

The protein localises to the nucleus. Component of the transcription complexes of the pulmonary surfactant-associated protein-B (SFTPB) and -C (SFTPC). Enhances homeobox protein Nkx-2.1-activated SFTPB and SFTPC promoter activities. The protein is Thyroid transcription factor 1-associated protein 26 (Ccdc59) of Mus musculus (Mouse).